The primary structure comprises 389 residues: tRNA (guanine-N(7)-)-methyltransferase non-catalytic subunit TRM82 (389 aa).

3 WD repeats span residues 44-86 (QNVP…HQLK), 134-179 (GHTS…KGFL), and 184-222 (QFVS…LITE).

Belongs to the WD repeat TRM82 family. Forms a heterodimer with the catalytic subunit TRM8.

Its subcellular location is the nucleus. The protein operates within tRNA modification; N(7)-methylguanine-tRNA biosynthesis. In terms of biological role, required for the formation of N(7)-methylguanine at position 46 (m7G46) in tRNA. In the complex, it is required to stabilize and induce conformational changes of the catalytic subunit. The polypeptide is tRNA (guanine-N(7)-)-methyltransferase non-catalytic subunit TRM82 (Lodderomyces elongisporus (strain ATCC 11503 / CBS 2605 / JCM 1781 / NBRC 1676 / NRRL YB-4239) (Yeast)).